Reading from the N-terminus, the 785-residue chain is MKLGKVEFCHFLQLIALFLCFSGMSQAELSRSRSKPYFQSGRSRTKRSWVWNQFFVLEEYMGSDPLYVGKLHSDVDKGDGSIKYILSGEGASSIFIIDENTGDIHATKRLDREEQAYYTLRAQALDRLTNKPVEPESEFVIKIQDINDNEPKFLDGPYTAGVPEMSPVGTSVVQVTATDADDPTYGNSARVVYSILQGQPYFSVEPKTGVIKTALPNMDREAKDQYLLVIQAKDMVGQNGGLSGTTSVTVTLTDVNDNPPRFPRRSYQYNVPESLPVASVVARIKAADADIGANAEMEYKIVDGDGLGIFKISVDKETQEGIITIQKELDFEAKTSYTLRIEAANKDADPRFLSLGPFSDTTTVKIIVEDVDEPPVFSSPLYPMEVSEATQVGNIIGTVAAHDPDSSNSPVRYSIDRNTDLERYFNIDANSGVITTAKSLDRETNAIHNITVLAMESQNPSQVGRGYVAITILDINDNAPEFAMDYETTVCENAQPGQVIQKISAVDKDEPSNGHQFYFSLTTDATNNHNFSLKDNKDNTASILTRRNGFRRQEQSVYYLPIFIVDSGSPSLSSTNTLTIRVCDCDADGVAQTCNAEAYVLPAGLSTGALIAILACVLTLLVLILLIVTMRRRKKEPLIFDEERDIRENIVRYDDEGGGEEDTEAFDMAALRNLNVIRDTKTRRDVTPEIQFLSRPAFKSIPDNVIFREFIWERLKEADVDPGAPPYDSLQTYAFEGNGSVAESLSSLDSISSNSDQNYDYLSDWGPRFKRLADMYGTGQESLYS.

Positions Met-1–Ala-27 are cleaved as a signal peptide. Positions Glu-28 to Arg-47 are excised as a propeptide. Residues Glu-28 to Thr-607 lie on the Extracellular side of the membrane. 5 Cadherin domains span residues Trp-49–Phe-153, Leu-154–Phe-262, Pro-263–Phe-377, Ser-378–Phe-482, and Phe-482–Tyr-599. N-linked (GlcNAc...) asparagine glycans are attached at residues Asn-449 and Asn-530. The chain crosses the membrane as a helical span at residues Gly-608–Val-628. Topologically, residues Thr-629–Ser-785 are cytoplasmic.

Its subcellular location is the cell membrane. Functionally, cadherins are calcium-dependent cell adhesion proteins. They preferentially interact with themselves in a homophilic manner in connecting cells; cadherins may thus contribute to the sorting of heterogeneous cell types. This chain is Cadherin-7 (CDH7), found in Homo sapiens (Human).